Here is a 39-residue protein sequence, read N- to C-terminus: Large ribosomal subunit protein bL36 (39 aa).

It belongs to the bacterial ribosomal protein bL36 family.

In Levilactobacillus brevis (strain ATCC 367 / BCRC 12310 / CIP 105137 / JCM 1170 / LMG 11437 / NCIMB 947 / NCTC 947) (Lactobacillus brevis), this protein is Large ribosomal subunit protein bL36.